The chain runs to 391 residues: Succinate--CoA ligase [ADP-forming] subunit beta (391 aa).

In terms of domain architecture, ATP-grasp spans 9–246; it reads KHLFTEAGIA…LTQEDETEVR (238 aa). Residues Lys46, 53 to 55, Glu99, Leu102, and Glu107 contribute to the ATP site; that span reads GRG. Residues Asn199 and Asp213 each contribute to the Mg(2+) site. Substrate-binding positions include Asn266 and 323 to 325; that span reads GIV.

This sequence belongs to the succinate/malate CoA ligase beta subunit family. As to quaternary structure, heterotetramer of two alpha and two beta subunits. Mg(2+) is required as a cofactor.

It carries out the reaction succinate + ATP + CoA = succinyl-CoA + ADP + phosphate. It catalyses the reaction GTP + succinate + CoA = succinyl-CoA + GDP + phosphate. It functions in the pathway carbohydrate metabolism; tricarboxylic acid cycle; succinate from succinyl-CoA (ligase route): step 1/1. Its function is as follows. Succinyl-CoA synthetase functions in the citric acid cycle (TCA), coupling the hydrolysis of succinyl-CoA to the synthesis of either ATP or GTP and thus represents the only step of substrate-level phosphorylation in the TCA. The beta subunit provides nucleotide specificity of the enzyme and binds the substrate succinate, while the binding sites for coenzyme A and phosphate are found in the alpha subunit. This chain is Succinate--CoA ligase [ADP-forming] subunit beta, found in Halorhodospira halophila (strain DSM 244 / SL1) (Ectothiorhodospira halophila (strain DSM 244 / SL1)).